We begin with the raw amino-acid sequence, 640 residues long: uncharacterized protein (640 aa).

The tract at residues 594-614 is disordered; that stretch reads QCSSDHCKPGSSETLPEATNE.

This is an uncharacterized protein from Rattus norvegicus (Rat).